The chain runs to 118 residues: Beta-2-microglobulin (118 aa).

An N-terminal signal peptide occupies residues Met1–Ala21. The Ig-like C1-type domain maps to Pro26–Lys113. Cys46 and Cys101 form a disulfide bridge.

It belongs to the beta-2-microglobulin family. Heterodimer of an alpha chain and a beta chain. Beta-2-microglobulin is the beta-chain of major histocompatibility complex class I molecules.

The protein localises to the secreted. Component of the class I major histocompatibility complex (MHC). Involved in the presentation of peptide antigens to the immune system. In Ornithorhynchus anatinus (Duckbill platypus), this protein is Beta-2-microglobulin (B2M).